The following is a 248-amino-acid chain: Uridylate kinase (248 aa).

Position 13–16 (13–16 (KLSG)) interacts with ATP. G55 is a binding site for UMP. ATP-binding residues include G56 and R60. UMP-binding positions include D75 and 136–143 (TGNPYFTT). ATP contacts are provided by T163, Y169, and D172.

It belongs to the UMP kinase family. In terms of assembly, homohexamer.

It is found in the cytoplasm. It catalyses the reaction UMP + ATP = UDP + ADP. The protein operates within pyrimidine metabolism; CTP biosynthesis via de novo pathway; UDP from UMP (UMPK route): step 1/1. With respect to regulation, inhibited by UTP. Functionally, catalyzes the reversible phosphorylation of UMP to UDP. In Leptospira interrogans serogroup Icterohaemorrhagiae serovar copenhageni (strain Fiocruz L1-130), this protein is Uridylate kinase.